A 182-amino-acid polypeptide reads, in one-letter code: dCTP deaminase, dUMP-forming (182 aa).

Residues 96-101 (RSSIGR), aspartate 113, 121-123 (TLE), glutamine 142, tyrosine 156, and glutamine 163 contribute to the dCTP site. Glutamate 123 (proton donor/acceptor) is an active-site residue.

Belongs to the dCTP deaminase family. In terms of assembly, homotrimer.

It carries out the reaction dCTP + 2 H2O = dUMP + NH4(+) + diphosphate. Its pathway is pyrimidine metabolism; dUMP biosynthesis; dUMP from dCTP: step 1/1. Functionally, bifunctional enzyme that catalyzes both the deamination of dCTP to dUTP and the hydrolysis of dUTP to dUMP without releasing the toxic dUTP intermediate. This is dCTP deaminase, dUMP-forming from Halothermothrix orenii (strain H 168 / OCM 544 / DSM 9562).